A 161-amino-acid chain; its full sequence is Phosphopantetheine adenylyltransferase (161 aa).

T9 contacts substrate. ATP contacts are provided by residues 9–10 and H17; that span reads TF. Residues K41, L73, and R87 each contribute to the substrate site. Residues 88–90, E98, and 123–129 contribute to the ATP site; these read GLR and YQFISGT.

This sequence belongs to the bacterial CoaD family. Homohexamer. Mg(2+) is required as a cofactor.

The protein resides in the cytoplasm. It catalyses the reaction (R)-4'-phosphopantetheine + ATP + H(+) = 3'-dephospho-CoA + diphosphate. Its pathway is cofactor biosynthesis; coenzyme A biosynthesis; CoA from (R)-pantothenate: step 4/5. Reversibly transfers an adenylyl group from ATP to 4'-phosphopantetheine, yielding dephospho-CoA (dPCoA) and pyrophosphate. This chain is Phosphopantetheine adenylyltransferase, found in Cupriavidus necator (strain ATCC 17699 / DSM 428 / KCTC 22496 / NCIMB 10442 / H16 / Stanier 337) (Ralstonia eutropha).